Consider the following 937-residue polypeptide: Beta-mannosidase A (937 aa).

Residues 1-23 (MRALPTTATTLLGVLFFPSASRS) form the signal peptide. N-linked (GlcNAc...) asparagine glycans are attached at residues Asn-42, Asn-82, Asn-250, Asn-285, Asn-319, Asn-329, and Asn-350. Glu-482 acts as the Proton donor in catalysis. Residues Asn-553, Asn-612, Asn-743, and Asn-796 are each glycosylated (N-linked (GlcNAc...) asparagine).

Belongs to the glycosyl hydrolase 2 family. Beta-mannosidase A subfamily. As to quaternary structure, homodimer. Post-translationally, N-glycosylated.

It localises to the secreted. It carries out the reaction Hydrolysis of terminal, non-reducing beta-D-mannose residues in beta-D-mannosides.. It participates in glycan metabolism; N-glycan degradation. In terms of biological role, exoglycosidase that cleaves the single beta-linked mannose residue from the non-reducing end of beta-mannosidic oligosaccharides of various complexity and length. Involved in the degradation of polymeric mannan and galactomannan. Releases the terminal mannose residue from mannotriose and is somewaht less active on other mannooligosaccharides. The sequence is that of Beta-mannosidase A (mndA) from Aspergillus aculeatus.